Consider the following 217-residue polypeptide: Cysteine-rich protein 3 (217 aa).

Residues 3–64 (WTCPRCQQPV…KPCYGALFGP (62 aa)) enclose the LIM zinc-binding 1 domain. The segment at 84 to 112 (PGCTTPLSPSSFSPPRPRTGLPQGKKSPP) is disordered. Residues 122–183 (SLCPGCGEPV…VPCYGYLFGP (62 aa)) enclose the LIM zinc-binding 2 domain.

Expressed in most tissues, but not in skeletal muscle.

The protein localises to the cytoplasm. The sequence is that of Cysteine-rich protein 3 (CRIP3) from Homo sapiens (Human).